The primary structure comprises 957 residues: MTQTLSQLENSGAFIERHIGPDAAQQQEMLNAVGAQSLNALTGQIVPKDIQLATPPQVGAPATEYAALAELKAIASRNKRFTSYIGMGYTAVQLPPVILRNMLENPGWYTAYTPYQPEVSQGRLEALLNFQQVTLDLTGLDMASASLLDEATAAAEAMAMAKRVSKLKNANRFFVASDVHPQTLDVVRTRAETFGFEVIVDDAQKVLDHQDVFGVLLQQVGTTGEIHDYTALISELKSRKIVVSVAADIMALVLLTAPGKQGADIVFGSAQRFGVPMGYGGPHAAFFAAKDEYKRSMPGRIIGVSKDAAGNTALRMAMQTREQHIRREKANSNICTSQVLLANIASLYAVYHGPIGLKRIANRIHRLTDILAAGLQQKGLKLRHAHYFDTLCVEVADKAGVLTRAEAAEINLRSDILNAVGITLDETTTRENVMQLFNVLLGDNHGLDIDTLDKDVAHDSRSIQPAMLRDDEILTHPVFNRYHSETEMMRYMHSLERKDLALNQAMIPLGSCTMKLNAAAEMIPITWPEFAELHPFCPPEQAEGYQQMIAQLADWLVKLTGYDAVCMQPNSGAQGEYAGLLAIRHYHESRNEGHRDICLIPASAHGTNPASAHMAGMQVVVVACDKNGNIDLTDLRAKAEQAGDNLSCIMVTYPSTHGVYEETIREVCEVVHQFGGQVYLDGANMNAQVGITSPGFIGADVSHLNLHKTFCIPHGGGGPGMGPIGVKAHLAPFVPGHSVVQIEGMLTRQGAVSAAPFGSASILPISWMYIRMMGAEGLKKASQVAILNANYIASRLQDAFPVLYTGRDGRVAHECILDIRPLKEETGISELDIAKRLIDYGFHAPTMSFPVAGTLMVEPTESESKVELDRFIDAMLAIRAEIDQVKAGVWPLEDNPLVNAPHIQNELVAEWAHPYSREVAVFPAGVADKYWPTVKRLDDVYGDRNLFCSCVPISEYQ.

Lysine 708 bears the N6-(pyridoxal phosphate)lysine mark.

This sequence belongs to the GcvP family. The glycine cleavage system is composed of four proteins: P, T, L and H. Pyridoxal 5'-phosphate serves as cofactor.

The catalysed reaction is N(6)-[(R)-lipoyl]-L-lysyl-[glycine-cleavage complex H protein] + glycine + H(+) = N(6)-[(R)-S(8)-aminomethyldihydrolipoyl]-L-lysyl-[glycine-cleavage complex H protein] + CO2. The glycine cleavage system catalyzes the degradation of glycine. The P protein binds the alpha-amino group of glycine through its pyridoxal phosphate cofactor; CO(2) is released and the remaining methylamine moiety is then transferred to the lipoamide cofactor of the H protein. The sequence is that of Glycine dehydrogenase (decarboxylating) from Escherichia coli (strain SE11).